Reading from the N-terminus, the 260-residue chain is HTH-type transcriptional repressor NanR (260 aa).

The HTH gntR-type domain occupies 27 to 95 (KKLSEMVEEE…NGERARISRP (69 aa)). Residues 55–74 (ERELMAFFNVGRPSVREALA) constitute a DNA-binding region (H-T-H motif).

This sequence belongs to the NanR family.

In terms of biological role, transcriptional repressor that controls expression of the genes required for the catabolism of sialic acids. This chain is HTH-type transcriptional repressor NanR, found in Edwardsiella tarda (strain FL6-60).